The primary structure comprises 557 residues: Leucine-rich glioma-inactivated protein 1 (557 aa).

Residues 1–34 form the signal peptide; sequence MESESIRRMGNACIPLKRIAYFLCLFSVVLLTEG. The region spanning 35 to 72 is the LRRNT domain; it reads KKPAKPKCPAVCTCSKDNALCENARSIPRTVPPDVISL. LRR repeat units follow at residues 92–113, 116–137, and 140–161; these read SLQL…AFIG, HLEY…TFRG, and SLIH…IFKG. Positions 173–223 constitute an LRRCT domain; it reads NSFNCDCKLKWLVEWLGHTNATVEDIYCEGPPEYKKRKINSLSPKDFDCII. Asparagine 192 carries N-linked (GlcNAc...) asparagine glycosylation. EAR repeat units lie at residues 225 to 267, 271 to 313, 317 to 364, 366 to 415, 419 to 462, 464 to 506, and 510 to 552; these read EFAK…EWDH, TFRN…KRDG, KFIK…KWNG, GFYS…QWSK, LFIN…KWGG, SFQD…NWDA, and KFVK…KHVI. The N-linked (GlcNAc...) asparagine glycan is linked to asparagine 277. Asparagine 422 carries N-linked (GlcNAc...) asparagine glycosylation.

As to quaternary structure, oligomer. Interacts with KCNA1 within a complex containing KCNA1, KCNA4 and KCNAB1. Can bind to ADAM11 and ADAM23. Part of a complex containing ADAM22, DLG4/PSD95 and CACNG2 (stargazin). Glycosylated. In terms of tissue distribution, expressed in brain. High levels found in hippocampus, thalamic nuclei, neocortex, and molecular and granule cell layers of the cerebellum.

It localises to the secreted. The protein resides in the synapse. Its subcellular location is the cytoplasm. Functionally, plays a role in suppressing the production of MMP1/3 through the phosphatidylinositol 3-kinase/ERK pathway. Regulates voltage-gated potassium channels assembled from KCNA1, KCNA4 and KCNAB1. It slows down channel inactivation by precluding channel closure mediated by the KCNAB1 subunit. Ligand for ADAM22 that positively regulates synaptic transmission mediated by AMPA-type glutamate receptors. The protein is Leucine-rich glioma-inactivated protein 1 (Lgi1) of Rattus norvegicus (Rat).